Reading from the N-terminus, the 404-residue chain is Exodeoxyribonuclease 7 large subunit (404 aa).

The protein belongs to the XseA family. Heterooligomer composed of large and small subunits.

The protein resides in the cytoplasm. It catalyses the reaction Exonucleolytic cleavage in either 5'- to 3'- or 3'- to 5'-direction to yield nucleoside 5'-phosphates.. Bidirectionally degrades single-stranded DNA into large acid-insoluble oligonucleotides, which are then degraded further into small acid-soluble oligonucleotides. The protein is Exodeoxyribonuclease 7 large subunit of Caldanaerobacter subterraneus subsp. tengcongensis (strain DSM 15242 / JCM 11007 / NBRC 100824 / MB4) (Thermoanaerobacter tengcongensis).